We begin with the raw amino-acid sequence, 415 residues long: MTTRTPSSGWLSRLAQGSLVKQILIGLVLGVLLALVSKPAAIAVGLLGTLFVGALKAVAPVLVLMLVMASIANHQHGQKTSIRPILFLYLLGTFSAALTAVLFSFLFPSTLHLTTAADSITPPSGIVEVLRGLLMSMVSNPIDALLNANYIGILVWAVGLGFALRHGNDTTKNLINDVSHAVTFIVKVVIRFAPLGIFGLVSSTLATTGFETLWGYAQLLLVLVGCMLLVALVINPLLVFWKIRRNPYPLVLTCLRESGVYAFFTRSSAANIPVNMALCEKLNLDRDTYSVSIPLGATINMAGAAITITVLTLAAVHTLNIPVDLPTALLLSVVASLCACGASGVAGGSLLLIPLACNMFGIPNDVAMQVVAVGFIIGVLQDSCETALNSSTDALFTAAACMAEDDQLAKNALRG.

8 consecutive transmembrane segments (helical) span residues 23-43, 47-67, 85-105, 144-164, 181-201, 220-240, 293-313, and 333-353; these read ILIG…AAIA, LGTL…LMLV, ILFL…LFSF, ALLN…GFAL, AVTF…FGLV, LLVL…LLVF, IPLG…VLTL, and VVAS…LLLI.

This sequence belongs to the dicarboxylate/amino acid:cation symporter (DAACS) (TC 2.A.23) family.

Its subcellular location is the cell inner membrane. It catalyses the reaction L-serine(in) + Na(+)(in) = L-serine(out) + Na(+)(out). The catalysed reaction is L-threonine(in) + Na(+)(in) = L-threonine(out) + Na(+)(out). In terms of biological role, involved in the import of serine and threonine into the cell, with the concomitant import of sodium (symport system). In Klebsiella pneumoniae subsp. pneumoniae (strain ATCC 700721 / MGH 78578), this protein is Serine/threonine transporter SstT.